Consider the following 58-residue polypeptide: Large ribosomal subunit protein uL30 (58 aa).

Belongs to the universal ribosomal protein uL30 family. Part of the 50S ribosomal subunit.

The protein is Large ribosomal subunit protein uL30 of Pseudomonas putida (strain W619).